A 233-amino-acid chain; its full sequence is B-cell lymphoma/leukemia 10 (233 aa).

M1 carries the N-acetylmethionine modification. Residues 13–101 (LTEVKKDALE…QSFLIQKITD (89 aa)) enclose the CARD domain. Residues K17, K31, and K63 each participate in a glycyl lysine isopeptide (Lys-Gly) (interchain with G-Cter in ubiquitin) cross-link. A Phosphoserine modification is found at S138. A disordered region spans residues 185 to 233 (SSFSSATLPRPGDPGAPPLPPDLRLEEGGSCGNSSEMFLPLRSRALSRQ). Pro residues predominate over residues 195–205 (PGDPGAPPLPP).

In terms of assembly, homomultimer; homooligomerized following recruitment by CARD domain-containing proteins that form a nucleating helical template that recruits BCL10 via CARD-CARD interaction. Self-associates by CARD-CARD interaction and interacts with other CARD-proteins such as CARD9, CARD10, CARD11 and CARD14. Forms a complex with CARD14 and MALT1; resulting in the formation of a CBM (CARD14-BCL10-MALT1) complex. Forms a complex with CARD11 and MALT1; resulting in the formation of a CBM (CARD11-BCL10-MALT1) complex. Forms a complex with CARD9 and MALT1; resulting in the formation of a CBM (CARD9-BCL10-MALT1) complex. Found in a membrane raft complex, at least composed of BCL10, CARD11, DPP4 and IKBKB. Binds caspase-9 with its C-terminal domain. Interacts with TRAF2 and BIRC2/c-IAP2. Interacts with PELI2 and SOCS3; these interactions may be mutually exclusive. In terms of processing, phosphorylated by IKBKB/IKKB. Post-translationally, ubiquitinated via both 'Lys-63'-linked and linear ('Met-1'-linked) polyubiquitin chains in response to T-cell receptor (TCR) activation. Ubiquitination is recognized by IKBKG/NEMO, the regulatory subunit of I-kappa-B kinase (IKK), and is required for TCR-induced NF-kappa-B activation. Linear ubiquitination at Lys-17, Lys-31 and Lys-63 is mediated by RNF31/HOIP; linear ubiquitination is recognized with much higher affinity than 'Lys-63'-linked ubiquitin by IKBKG/NEMO. CARD11 is required for linear ubiquitination by HOIP by promoting the targeting of BCL10 to RNF31/HOIP. Proteolytically cleaved by MALT1; required for T-cell activation. Highly expressed in heart, brain, spleen, lung, liver, skeletal muscle, kidney and testis. Detected in developing brain, olfactory epithelium, tongue, whisker follicles, salivary gland, heart, lung, liver and intestinal epithelia of stage 15 embryos.

Its subcellular location is the cytoplasm. It is found in the membrane raft. Functionally, plays a key role in both adaptive and innate immune signaling by bridging CARD domain-containing proteins to immune activation. Acts by channeling adaptive and innate immune signaling downstream of CARD domain-containing proteins CARD9, CARD11 and CARD14 to activate NF-kappa-B and MAP kinase p38 (MAPK11, MAPK12, MAPK13 and/or MAPK14) pathways which stimulate expression of genes encoding pro-inflammatory cytokines and chemokines. Recruited by activated CARD domain-containing proteins: homooligomerized CARD domain-containing proteins form a nucleating helical template that recruits BCL10 via CARD-CARD interaction, thereby promoting polymerization of BCL10, subsequent recruitment of MALT1 and formation of a CBM complex. This leads to activation of NF-kappa-B and MAP kinase p38 (MAPK11, MAPK12, MAPK13 and/or MAPK14) pathways which stimulate expression of genes encoding pro-inflammatory cytokines and chemokines. Activated by CARD9 downstream of C-type lectin receptors; CARD9-mediated signals are essential for antifungal immunity. Activated by CARD11 downstream of T-cell receptor (TCR) and B-cell receptor (BCR). Promotes apoptosis, pro-caspase-9 maturation and activation of NF-kappa-B via NIK and IKK. The protein is B-cell lymphoma/leukemia 10 (Bcl10) of Mus musculus (Mouse).